Here is a 510-residue protein sequence, read N- to C-terminus: Coatomer subunit delta (510 aa).

One can recognise an MHD domain in the interval 270-510; that stretch reads MESVHMKIEE…TFLVDKYEIL (241 aa).

Belongs to the adaptor complexes medium subunit family. Delta-COP subfamily. As to quaternary structure, oligomeric complex that consists of at least the alpha, beta, beta', gamma, delta, epsilon and zeta subunits.

The protein localises to the cytoplasm. It localises to the golgi apparatus membrane. The protein resides in the cytoplasmic vesicle. It is found in the COPI-coated vesicle membrane. In terms of biological role, the coatomer is a cytosolic protein complex that binds to dilysine motifs and reversibly associates with Golgi non-clathrin-coated vesicles, which further mediate biosynthetic protein transport from the ER, via the Golgi up to the trans Golgi network. Coatomer complex is required for budding from Golgi membranes, and is essential for the retrograde Golgi-to-ER transport of dilysine-tagged proteins. In mammals, the coatomer can only be recruited by membranes associated to ADP-ribosylation factors (ARFs), which are small GTP-binding proteins; the complex also influences the Golgi structural integrity, as well as the processing, activity, and endocytic recycling of LDL receptors. The sequence is that of Coatomer subunit delta (ARCN1) from Gallus gallus (Chicken).